A 758-amino-acid chain; its full sequence is UPF0313 protein CV_1738 (758 aa).

In terms of domain architecture, Radical SAM core spans 377–642; the sequence is AWEMIKYSVN…VDVVRDGYRR (266 aa). [4Fe-4S] cluster is bound by residues C391, C395, and C398. Positions 698-758 are disordered; sequence GAPMNRGKSP…KPGGKTSRSR (61 aa). The span at 727–737 shows a compositional bias: gly residues; the sequence is RGQGGQGGRPG.

This sequence belongs to the UPF0313 family. Requires [4Fe-4S] cluster as cofactor.

This Chromobacterium violaceum (strain ATCC 12472 / DSM 30191 / JCM 1249 / CCUG 213 / NBRC 12614 / NCIMB 9131 / NCTC 9757 / MK) protein is UPF0313 protein CV_1738.